The sequence spans 371 residues: Leu/Ile/Val-binding protein homolog 1 (371 aa).

An N-terminal signal peptide occupies residues 1–23 (MRKTLFSGVALAAVIAFGGSAWA).

Belongs to the leucine-binding protein family.

Its function is as follows. Component of an amino-acid transport system. This is Leu/Ile/Val-binding protein homolog 1 from Brucella suis biovar 1 (strain 1330).